The chain runs to 146 residues: UPF0178 protein BCAH187_A3092 (146 aa).

It belongs to the UPF0178 family.

This is UPF0178 protein BCAH187_A3092 from Bacillus cereus (strain AH187).